An 86-amino-acid chain; its full sequence is MKVSVVITLAVLGIMFVWASAAELEERGSDQRDSPAWLKSMERIFQSEERECTKFLGGCSEDSECCPHLGCKDVLYYCAWDGTFGK.

Positions 1-21 are cleaved as a signal peptide; it reads MKVSVVITLAVLGIMFVWASA. The propeptide occupies 22–50; the sequence is AELEERGSDQRDSPAWLKSMERIFQSEER. Disulfide bonds link cysteine 52–cysteine 66, cysteine 59–cysteine 71, and cysteine 65–cysteine 78. The residue at position 84 (phenylalanine 84) is a Phenylalanine amide.

It belongs to the neurotoxin 10 (Hwtx-1) family. 37 (Jztx-31) subfamily. In terms of tissue distribution, expressed by the venom gland.

Its subcellular location is the secreted. In terms of biological role, inhibits both peak current and fast inactivation of voltage-gated sodium channels (Nav) channels. Inhibits the inactivation of Nav on DRG neurons (EC(50)=1.77 uM) and peak current of cardiac myocytes (IC(50)=0.90 uM). In Chilobrachys guangxiensis (Chinese earth tiger tarantula), this protein is Mu-theraphotoxin-Cg2a 1.